An 82-amino-acid polypeptide reads, in one-letter code: Acyl carrier protein (82 aa).

The 76-residue stretch at 3–78 (QEIFERVKKV…KAVEHISEKV (76 aa)) folds into the Carrier domain. Ser-38 bears the O-(pantetheine 4'-phosphoryl)serine mark.

It belongs to the acyl carrier protein (ACP) family. In terms of processing, 4'-phosphopantetheine is transferred from CoA to a specific serine of apo-ACP by AcpS. This modification is essential for activity because fatty acids are bound in thioester linkage to the sulfhydryl of the prosthetic group.

The protein localises to the cytoplasm. It functions in the pathway lipid metabolism; fatty acid biosynthesis. Its function is as follows. Carrier of the growing fatty acid chain in fatty acid biosynthesis. The protein is Acyl carrier protein of Gloeothece citriformis (strain PCC 7424) (Cyanothece sp. (strain PCC 7424)).